We begin with the raw amino-acid sequence, 416 residues long: UDP-N-acetylmuramoylalanine--D-glutamate ligase (416 aa).

104 to 110 contacts ATP; sequence GSNGKST.

It belongs to the MurCDEF family.

Its subcellular location is the cytoplasm. It carries out the reaction UDP-N-acetyl-alpha-D-muramoyl-L-alanine + D-glutamate + ATP = UDP-N-acetyl-alpha-D-muramoyl-L-alanyl-D-glutamate + ADP + phosphate + H(+). It functions in the pathway cell wall biogenesis; peptidoglycan biosynthesis. Cell wall formation. Catalyzes the addition of glutamate to the nucleotide precursor UDP-N-acetylmuramoyl-L-alanine (UMA). In Francisella tularensis subsp. tularensis (strain FSC 198), this protein is UDP-N-acetylmuramoylalanine--D-glutamate ligase.